The primary structure comprises 65 residues: Large ribosomal subunit protein bL35 (65 aa).

Composition is skewed to basic residues over residues Met-1–Thr-15 and Gln-26–Leu-44. The interval Met-1 to Ala-65 is disordered.

The protein belongs to the bacterial ribosomal protein bL35 family.

This is Large ribosomal subunit protein bL35 from Cupriavidus metallidurans (strain ATCC 43123 / DSM 2839 / NBRC 102507 / CH34) (Ralstonia metallidurans).